The chain runs to 431 residues: Arginine biosynthesis bifunctional protein ArgJ, mitochondrial (431 aa).

The substrate site is built by T174, K200, T211, E297, N426, and T431. Residue T211 is the Nucleophile of the active site.

It belongs to the ArgJ family. In terms of assembly, heterodimer of an alpha and a beta chain. In terms of processing, the alpha and beta chains are autoproteolytically processed from a single precursor protein within the mitochondrion.

It is found in the mitochondrion matrix. The enzyme catalyses N(2)-acetyl-L-ornithine + L-glutamate = N-acetyl-L-glutamate + L-ornithine. It carries out the reaction L-glutamate + acetyl-CoA = N-acetyl-L-glutamate + CoA + H(+). The protein operates within amino-acid biosynthesis; L-arginine biosynthesis; L-ornithine and N-acetyl-L-glutamate from L-glutamate and N(2)-acetyl-L-ornithine (cyclic): step 1/1. Its pathway is amino-acid biosynthesis; L-arginine biosynthesis; N(2)-acetyl-L-ornithine from L-glutamate: step 1/4. Functionally, catalyzes two activities which are involved in the cyclic version of arginine biosynthesis: the synthesis of acetylglutamate from glutamate and acetyl-CoA, and of ornithine by transacetylation between acetylornithine and glutamate. The chain is Arginine biosynthesis bifunctional protein ArgJ, mitochondrial from Yarrowia lipolytica (strain CLIB 122 / E 150) (Yeast).